The chain runs to 319 residues: ADP-ribosyl cyclase/cyclic ADP-ribose hydrolase 2 (319 aa).

A signal peptide spans 1-33 (MAVQACALSLRLGLWMSLLLPVLPGAGARAAGA). 3 disulfides stabilise this stretch: C52–C68, C84–C164, and C145–C158. N-linked (GlcNAc...) asparagine glycosylation is found at N67 and N96. Residue W110 participates in NAD(+) binding. Position 110 (W110) interacts with nicotinamide. N-linked (GlcNAc...) asparagine glycosylation is present at N149. W173 provides a ligand contact to NAD(+). Residue N193 is glycosylated (N-linked (GlcNAc...) asparagine). E211 lines the NAD(+) pocket. 2 cysteine pairs are disulfide-bonded: C239-C260 and C272-C281. Residue S294 is the site of GPI-anchor amidated serine attachment. Positions 295–319 (PALHAIGDISLIISLLVALASSSQA) are excised as a propeptide.

It belongs to the ADP-ribosyl cyclase family. Homodimer. Pancreatic islets, kidney, spleen, heart, thymus, intestine and salivary gland.

The protein localises to the cell membrane. It catalyses the reaction NAD(+) + H2O = ADP-D-ribose + nicotinamide + H(+). It carries out the reaction NAD(+) = cyclic ADP-beta-D-ribose + nicotinamide + H(+). The catalysed reaction is cyclic ADP-beta-D-ribose + H2O = ADP-D-ribose. Functionally, catalyzes both the synthesis of cyclic ADP-beta-D-ribose (cADPR) from NAD(+), and its hydrolysis to ADP-D-ribose (ADPR). Cyclic ADPR is known to serve as an endogenous second messenger that elicits calcium release from intracellular stores, and thus regulates the mobilization of intracellular calcium. May be involved in pre-B-cell growth. The chain is ADP-ribosyl cyclase/cyclic ADP-ribose hydrolase 2 (Bst1) from Rattus norvegicus (Rat).